We begin with the raw amino-acid sequence, 377 residues long: Palmitoyltransferase PFA4 (377 aa).

Residues 1–9 (MAIKLKNRW) are Cytoplasmic-facing. A helical transmembrane segment spans residues 10–30 (LGVAIPAFLVALIGYGSHYFI). Residues 31-122 (LSNFLSWNEQ…NCVGHSNFPH (92 aa)) lie on the Lumenal side of the membrane. Residues 78-128 (NYCKKCRVYKPERAHHCKTCNQCVLAMDHHCPWTLNCVGHSNFPHFMRFLF) form the DHHC domain. Cys108 acts as the S-palmitoyl cysteine intermediate in catalysis. A helical membrane pass occupies residues 123-143 (FMRFLFWVIFSTAYLLFLLIG). Residues 144–163 (RIYLLWSIRHTAFHHRSTSE) are Cytoplasmic-facing. The helical transmembrane segment at 164-184 (IIFICIMTPMDAFVLLTVSSL) threads the bilayer. Residues 185-377 (LGRCIYNQCL…SDFGVDTELE (193 aa)) are Lumenal-facing.

This sequence belongs to the DHHC palmitoyltransferase family. PFA4 subfamily.

It is found in the endoplasmic reticulum membrane. The catalysed reaction is L-cysteinyl-[protein] + hexadecanoyl-CoA = S-hexadecanoyl-L-cysteinyl-[protein] + CoA. In terms of biological role, mediates the reversible addition of palmitate to target proteins, thereby regulating their membrane association and biological function. This is Palmitoyltransferase PFA4 from Kluyveromyces lactis (strain ATCC 8585 / CBS 2359 / DSM 70799 / NBRC 1267 / NRRL Y-1140 / WM37) (Yeast).